The sequence spans 249 residues: Cilia- and flagella-associated protein 410 (249 aa).

LRR repeat units follow at residues N19–P40, S41–R62, and R63–K84. The 41-residue stretch at N97–E137 folds into the LRRCT domain. A disordered region spans residues H146 to S203. Polar residues predominate over residues N162–L175.

As to quaternary structure, found in a complex with CFAP410, NEK1 and SPATA7. Interacts with NEK1. In terms of tissue distribution, expressed in the retina.

Its subcellular location is the cell projection. The protein resides in the cilium. It localises to the cytoplasm. The protein localises to the cytoskeleton. It is found in the cilium basal body. Its subcellular location is the mitochondrion. The protein resides in the photoreceptor outer segment. Plays a role in cilia formation and/or maintenance. Plays a role in the regulation of cell morphology and cytoskeletal organization. Involved in DNA damage repair. This is Cilia- and flagella-associated protein 410 from Mus musculus (Mouse).